The sequence spans 287 residues: Stomatin-like protein 3 (287 aa).

Ser3 carries the post-translational modification Phosphoserine. The chain crosses the membrane as a helical; Signal-anchor for type III membrane protein span at residues 25–45 (WILFFLSFLLMLVTFPISVWM). Residues 46-287 (CLKIIKEYER…GNNKKVTAKA (242 aa)) are Cytoplasmic-facing. Position 237 is a phosphoserine (Ser237).

It belongs to the band 7/mec-2 family. Homodimer. Interacts with PIEZO1 and PIEZO2. Expressed by all dorsal root ganglion neurons and is selectively expressed in neuronal tissues. Detected in olfactory epithelium.

It localises to the cell membrane. Its function is as follows. Required for the function of many mechanoreceptors. Modulate mechanotransduction channels and acid-sensing ion channels (ASIC) proteins. Potentiates PIEZO1 and PIEZO2 function by increasing their sensitivity to mechanical stimulations. This chain is Stomatin-like protein 3 (Stoml3), found in Mus musculus (Mouse).